We begin with the raw amino-acid sequence, 504 residues long: Endochitinase (504 aa).

The N-terminal stretch at 1-22 is a signal peptide; the sequence is MNRTTLILFFIILSNTITVIHG. The region spanning 23 to 392 is the GH18 domain; it reads YVRGCYYTNW…NAISSELEGE (370 aa). An intrachain disulfide couples Cys27 to Cys52. Residues 78–79 and 105–108 each bind chitin; these read TE and GGYN. The Proton donor role is filled by Glu148. Residues Tyr149, 212-215, and Trp362 each bind chitin; that span reads MSYD. Positions 389–450 are disordered; sequence LEGESENPEI…YDTDETEGQE (62 aa). A compositionally biased stretch (low complexity) spans 396 to 408; that stretch reads PEITTEEPSITET. 2 tandem repeats follow at residues 407 to 420 and 421 to 434. Residues 407–448 form a 3 X 14 AA approximate tandem repeats of E-T-E-A-Y-[ED]-T-D-E-T-E-E-T-S region; the sequence is ETEAYETDETEETSETEAYDTDETEETSETEATTYDTDETEG. Acidic residues predominate over residues 409 to 435; that stretch reads EAYETDETEETSETEAYDTDETEETSE. A 3; approximate repeat occupies 435–448; sequence ETEATTYDTDETEG. One can recognise a Chitin-binding type-2 domain in the interval 448 to 504; it reads GQECPERDGLFPHPTDCHLFIQCANNIAYVMQCPATTFFNDAIKVCDHMTNAPDTCI. Residues Cys480 and Cys493 are joined by a disulfide bond.

Belongs to the glycosyl hydrolase 18 family. Chitinase class II subfamily. O-glycosylated.

It carries out the reaction Random endo-hydrolysis of N-acetyl-beta-D-glucosaminide (1-&gt;4)-beta-linkages in chitin and chitodextrins.. Its function is as follows. Microfilarial chitinase, which may function to degrade chitin-containing structures in the micro-filaria or in its mosquito vector during parasite development and transmission. In Brugia malayi (Filarial nematode worm), this protein is Endochitinase.